The sequence spans 285 residues: UPF0014 membrane protein STAR2 (285 aa).

The next 7 membrane-spanning stretches (helical) occupy residues 30–50 (FLVG…AVAL), 64–84 (YAMA…QFIF), 88–108 (SAAW…YTAG), 119–139 (HIAA…LVAL), 148–168 (YIIP…GVTM), 203–225 (SLVI…ALPG), and 240–262 (AIQL…SILS).

This sequence belongs to the UPF0014 family. As to quaternary structure, interacts with STAR2. Expressed in roots.

It localises to the membrane. Associates with STAR2 to form a functional transmembrane ABC transporter required for detoxification of aluminum (Al) in roots. Can specifically transport UDP-glucose. This chain is UPF0014 membrane protein STAR2, found in Oryza sativa subsp. japonica (Rice).